The primary structure comprises 356 residues: Surface presentation of antigens protein SpaS (356 aa).

The next 5 membrane-spanning stretches (helical) occupy residues 29–49, 72–92, 132–152, 179–199, and 261–281; these read LIIA…GSFN, LAVF…CLVC, VKDT…AIIC, LLAL…LDAI, and HITI…ISVY.

The protein belongs to the type III secretion exporter family.

It is found in the cell inner membrane. In terms of biological role, involved in a secretory pathway responsible for the surface presentation of determinants needed for the entry of Salmonella species into mammalian cells. The polypeptide is Surface presentation of antigens protein SpaS (spaS) (Salmonella typhimurium (strain LT2 / SGSC1412 / ATCC 700720)).